Reading from the N-terminus, the 176-residue chain is Large ribosomal subunit protein uL10 (176 aa).

Belongs to the universal ribosomal protein uL10 family. In terms of assembly, part of the ribosomal stalk of the 50S ribosomal subunit. The N-terminus interacts with L11 and the large rRNA to form the base of the stalk. The C-terminus forms an elongated spine to which L12 dimers bind in a sequential fashion forming a multimeric L10(L12)X complex.

In terms of biological role, forms part of the ribosomal stalk, playing a central role in the interaction of the ribosome with GTP-bound translation factors. The chain is Large ribosomal subunit protein uL10 from Thioalkalivibrio sulfidiphilus (strain HL-EbGR7).